We begin with the raw amino-acid sequence, 152 residues long: Arginine repressor (152 aa).

This sequence belongs to the ArgR family.

It is found in the cytoplasm. It participates in amino-acid biosynthesis; L-arginine biosynthesis [regulation]. Its function is as follows. Regulates arginine biosynthesis genes. This chain is Arginine repressor, found in Lactiplantibacillus plantarum (strain ATCC BAA-793 / NCIMB 8826 / WCFS1) (Lactobacillus plantarum).